The sequence spans 750 residues: Tyrosine-protein phosphatase 2 (750 aa).

The tract at residues 1-20 (MDRIAQQYRNGKRDNNGNRM) is disordered. At Ser-258 the chain carries Phosphoserine. Disordered stretches follow at residues 327 to 348 (LHQKQLSQKQRGPQSTDDSKLY) and 425 to 450 (VKLPHSPKPPAVSEASTTETKTDKSY). A compositionally biased stretch (polar residues) spans 330 to 348 (KQLSQKQRGPQSTDDSKLY). One can recognise a Tyrosine-protein phosphatase domain in the interval 383 to 737 (SPSPLSSDDT…IACYEALLNY (355 aa)). Residue Ser-430 is modified to Phosphoserine. The active-site Phosphocysteine intermediate is Cys-666.

This sequence belongs to the protein-tyrosine phosphatase family. Non-receptor class subfamily. In terms of assembly, interacts with HOG1.

It localises to the cytoplasm. The protein localises to the nucleus. The catalysed reaction is O-phospho-L-tyrosyl-[protein] + H2O = L-tyrosyl-[protein] + phosphate. In terms of biological role, major phosphatase responsible with PTP3 for tyrosine dephosphorylation of MAP kinase HOG1 to inactivate its activity. May also be involved in the regulation of MAP kinase FUS3. May be implicated in the ubiquitin-mediated protein degradation. In Saccharomyces cerevisiae (strain ATCC 204508 / S288c) (Baker's yeast), this protein is Tyrosine-protein phosphatase 2 (PTP2).